The sequence spans 663 residues: Probable receptor-like protein kinase At1g49730 (663 aa).

The N-terminal stretch at 1 to 25 is a signal peptide; that stretch reads MVVNSQAFLLALIALLATQLPSLMA. Over 26-254 the chain is Extracellular; it reads ADCPLDFSGS…TNPYHLTMVP (229 aa). N-linked (GlcNAc...) asparagine glycosylation is found at N36, N46, N70, N101, and N171. Positions 213–243 are disordered; the sequence is SFSPVASPEPSPSTVGGISPSNSDSQMTTSR. A compositionally biased stretch (polar residues) spans 224-243; the sequence is PSTVGGISPSNSDSQMTTSR. A helical transmembrane segment spans residues 255–275; it reads TIGIVVTAVALTMLVVLVILI. Topologically, residues 276–663 are cytoplasmic; the sequence is RRKNRELDES…PHSPINGFSF (388 aa). The Protein kinase domain occupies 327–609; that stretch reads NDFNTVIGQG…ESCDPVHSAF (283 aa). Residues 333–341 and K355 contribute to the ATP site; that span reads IGQGGFGTV. D451 functions as the Proton acceptor in the catalytic mechanism. Residues 631–663 are disordered; the sequence is RGDSRIFGPSSSTTSRSHYSRSLPHSPINGFSF. Over residues 640-652 the composition is skewed to low complexity; the sequence is SSSTTSRSHYSRS.

Belongs to the protein kinase superfamily. Ser/Thr protein kinase family.

It localises to the cell membrane. The enzyme catalyses L-seryl-[protein] + ATP = O-phospho-L-seryl-[protein] + ADP + H(+). It carries out the reaction L-threonyl-[protein] + ATP = O-phospho-L-threonyl-[protein] + ADP + H(+). The sequence is that of Probable receptor-like protein kinase At1g49730 from Arabidopsis thaliana (Mouse-ear cress).